The chain runs to 82 residues: T-complex protein 1 subunit gamma (82 aa).

Residue Gly-15 coordinates ADP. Gly-15 is a binding site for ATP. Asp-66 contributes to the Mg(2+) binding site. The ADP site is built by Gly-67, Thr-68, Thr-69, and Ser-70. Residues Gly-67, Thr-68, and Thr-69 each coordinate ATP.

It belongs to the TCP-1 chaperonin family. As to quaternary structure, component of the chaperonin-containing T-complex (TRiC), a hexadecamer composed of two identical back-to-back stacked rings enclosing a protein folding chamber. Each ring is made up of eight different subunits: TCP1/CCT1, CCT2, CCT3, CCT4, CCT5, CCT6A/CCT6, CCT7, CCT8. Interacts with PACRG. Interacts with DNAAF4. Interacts with DLEC1.

The protein resides in the cytoplasm. It catalyses the reaction ATP + H2O = ADP + phosphate + H(+). Functionally, component of the chaperonin-containing T-complex (TRiC), a molecular chaperone complex that assists the folding of actin, tubulin and other proteins upon ATP hydrolysis. The TRiC complex mediates the folding of WRAP53/TCAB1, thereby regulating telomere maintenance. As part of the TRiC complex may play a role in the assembly of BBSome, a complex involved in ciliogenesis regulating transports vesicles to the cilia. The polypeptide is T-complex protein 1 subunit gamma (CCT3) (Sus scrofa (Pig)).